Consider the following 595-residue polypeptide: Putative laccase-18 (595 aa).

Residues 1-29 (MEKLSTAASLFGVVVAATALAMAVVGGEA) form the signal peptide. Plastocyanin-like domains are found at residues 37 to 153 (MVHE…PRDG) and 162 to 316 (KDVP…YTGA). N-linked (GlcNAc...) asparagine glycans are attached at residues N42 and N48. Cu cation contacts are provided by H87 and H89. N-linked (GlcNAc...) asparagine glycosylation occurs at N121. The Cu cation site is built by H132 and H134. Residues N206, N345, N382, N402, N409, N439, and N470 are each glycosylated (N-linked (GlcNAc...) asparagine). Positions 429 to 571 (DFPVRPPRPF…ATAFIVEDGP (143 aa)) constitute a Plastocyanin-like 3 domain. 8 residues coordinate Cu cation: N488, H491, H493, H550, C551, H552, H556, and M561. The segment at 570–595 (GPTPETSLPPPPPEFKRCGTNGLSQP) is disordered.

Belongs to the multicopper oxidase family. Requires Cu cation as cofactor.

The protein localises to the secreted. The protein resides in the extracellular space. Its subcellular location is the apoplast. The catalysed reaction is 4 hydroquinone + O2 = 4 benzosemiquinone + 2 H2O. Functionally, lignin degradation and detoxification of lignin-derived products. In Oryza sativa subsp. indica (Rice), this protein is Putative laccase-18 (LAC18).